The chain runs to 339 residues: N-acetyl-gamma-glutamyl-phosphate reductase (339 aa).

The active site involves C145.

This sequence belongs to the NAGSA dehydrogenase family. Type 1 subfamily.

It is found in the cytoplasm. It catalyses the reaction N-acetyl-L-glutamate 5-semialdehyde + phosphate + NADP(+) = N-acetyl-L-glutamyl 5-phosphate + NADPH + H(+). Its pathway is amino-acid biosynthesis; L-arginine biosynthesis; N(2)-acetyl-L-ornithine from L-glutamate: step 3/4. Its function is as follows. Catalyzes the NADPH-dependent reduction of N-acetyl-5-glutamyl phosphate to yield N-acetyl-L-glutamate 5-semialdehyde. The protein is N-acetyl-gamma-glutamyl-phosphate reductase of Thermotoga petrophila (strain ATCC BAA-488 / DSM 13995 / JCM 10881 / RKU-1).